Reading from the N-terminus, the 300-residue chain is Protease HtpX homolog (300 aa).

The next 2 membrane-spanning stretches (helical) occupy residues 7–24 (GILMAVMTALFLGVGALI) and 29–46 (GAIIALVIAAGMNLFTFW). A Zn(2+)-binding site is contributed by His130. Residue Glu131 is part of the active site. His134 provides a ligand contact to Zn(2+). The next 2 membrane-spanning stretches (helical) occupy residues 145-165 (VTATFAGAISMLANFAFFFGG) and 174-194 (PMGLVGTLALMFLAPLAAGLV). Zn(2+) is bound at residue Glu203.

The protein belongs to the peptidase M48B family. It depends on Zn(2+) as a cofactor.

The protein resides in the cell inner membrane. In Cereibacter sphaeroides (strain ATCC 17029 / ATH 2.4.9) (Rhodobacter sphaeroides), this protein is Protease HtpX homolog.